A 693-amino-acid chain; its full sequence is CREB-regulated transcription coactivator 2 (693 aa).

Polar residues predominate over residues 1–20 (MATSGANGPGSATASASNPR). Residues 1–30 (MATSGANGPGSATASASNPRKFSEKIALQK) are disordered. A2 bears the N-acetylalanine mark. R51 is modified (asymmetric dimethylarginine; by PRMT6). A phosphoserine mark is found at S70, S86, and S90. An asymmetric dimethylarginine; by PRMT6 mark is found at R99, R120, and R123. S136 bears the Phosphoserine mark. Asymmetric dimethylarginine; by PRMT6 is present on residues R161 and R168. Phosphothreonine is present on T169. At S171 the chain carries Phosphoserine. Residues 174–188 (ALHTSVMNPSPQDTY) show a composition bias toward polar residues. Residues 174–210 (ALHTSVMNPSPQDTYPSPAAPSVLPSRRGGCLDGETD) form a disordered region. A required for interaction with COP1 region spans residues 209–215 (TDSKVPA). A Glycyl lysine isopeptide (Lys-Gly) (interchain with G-Cter in SUMO2) cross-link involves residue K234. The short motif at 271–287 (TGGSLPDLTNLHFPPPL) is the Nuclear export signal element. Disordered stretches follow at residues 271–307 (TGGS…GSST), 335–463 (HSPL…SPTL), and 476–548 (KLPT…QSYH). S274 carries the phosphoserine; by MARK2 modification. Position 306 is a phosphoserine (S306). Positions 339–351 (SHPSFQSSLSNPN) are enriched in polar residues. Low complexity-rich tracts occupy residues 352–378 (LQAS…SSLA) and 386–424 (SLGH…PGAS). A phosphoserine mark is found at S368, S393, S433, and S456. A compositionally biased stretch (polar residues) spans 447 to 463 (SQQQLPKQFSPTMSPTL). Y488 carries the phosphotyrosine modification. A phosphoserine mark is found at S489 and S492. T501 is modified (phosphothreonine). Phosphoserine is present on residues S613 and S624.

Belongs to the TORC family. Binds, as a tetramer, through its N-terminal region, with the bZIP domain of CREB1. 'Arg-314' in the bZIP domain of CREB1 is essential for this interaction. Interaction, via its C-terminal, with TAF4, enhances recruitment of TAF4 to CREB1. Interacts with SIK2. Interacts with 14-3-3 proteins, YWHAB and YWHAG. Interacts (probably when phosphorylated at Ser-171) with YWHAE. Interacts with calmodulin-dependent catalytic subunit PPP3CA/calcineurin A. Interaction with COP1 mediates nuclear export and degradation of CRTC2. Post-translationally, phosphorylation/dephosphorylation states of Ser-171 are required for regulating transduction of CREB activity. CRTCs/TORCs are inactive when phosphorylated, and active when dephosphorylated at this site. This primary site of phosphorylation, is regulated by cAMP and calcium levels and is dependent on the phosphorylation of SIKs (SIK1 and SIK2) by LKB1. Following adenylyl cyclase activation, dephosphorylated at Ser-171 by PPP3CA/calcineurin A resulting in CRTC2 dissociation from 14-3-3 proteins and PPP3CA. Both insulin and AMPK increase this phosphorylation of CRTC2 while glucagon suppresses it. Phosphorylation at Ser-274 by MARK2 is induced under low glucose conditions and dephosphorylated in response to glucose influx. Phosphorylation at Ser-274 promotes interaction with 14-3-3 proteins and translocation to the cytoplasm. Asymmetric dimethylation of arginine resisues by PRMT6 enhances the association of CRTC2 with CREB on the promoters of gluconeogenic genes.

It is found in the cytoplasm. It localises to the nucleus. Functionally, transcriptional coactivator for CREB1 which activates transcription through both consensus and variant cAMP response element (CRE) sites. Acts as a coactivator, in the SIK/TORC signaling pathway, being active when dephosphorylated and acts independently of CREB1 'Ser-133' phosphorylation. Enhances the interaction of CREB1 with TAF4. Regulates gluconeogenesis as a component of the LKB1/AMPK/TORC2 signaling pathway. Regulates the expression of specific genes such as the steroidogenic gene, StAR. Potent coactivator of PPARGC1A and inducer of mitochondrial biogenesis in muscle cells. The protein is CREB-regulated transcription coactivator 2 (CRTC2) of Bos taurus (Bovine).